A 210-amino-acid chain; its full sequence is Somatotropin (210 aa).

The N-terminal stretch at 1–22 (MGQVFLLMPVLLVSCFLSQGAA) is a signal peptide. A Zn(2+)-binding site is contributed by H38. The cysteines at positions 71 and 183 are disulfide-linked. Zn(2+) is bound at residue E192. An intrachain disulfide couples C200 to C208.

The protein belongs to the somatotropin/prolactin family.

The protein localises to the secreted. In terms of biological role, growth hormone plays an important role in growth control and is involved in the regulation of several anabolic processes. Implicated as an osmoregulatory substance important for seawater adaptation. This is Somatotropin (gh) from Oncorhynchus kisutch (Coho salmon).